Here is a 292-residue protein sequence, read N- to C-terminus: 4-hydroxy-tetrahydrodipicolinate synthase (292 aa).

Thr45 contacts pyruvate. The Proton donor/acceptor role is filled by Tyr133. Residue Lys162 is the Schiff-base intermediate with substrate of the active site. Residue Ile204 participates in pyruvate binding.

The protein belongs to the DapA family. Homotetramer; dimer of dimers.

Its subcellular location is the cytoplasm. It carries out the reaction L-aspartate 4-semialdehyde + pyruvate = (2S,4S)-4-hydroxy-2,3,4,5-tetrahydrodipicolinate + H2O + H(+). It functions in the pathway amino-acid biosynthesis; L-lysine biosynthesis via DAP pathway; (S)-tetrahydrodipicolinate from L-aspartate: step 3/4. In terms of biological role, catalyzes the condensation of (S)-aspartate-beta-semialdehyde [(S)-ASA] and pyruvate to 4-hydroxy-tetrahydrodipicolinate (HTPA). In Nitratidesulfovibrio vulgaris (strain DSM 19637 / Miyazaki F) (Desulfovibrio vulgaris), this protein is 4-hydroxy-tetrahydrodipicolinate synthase.